The primary structure comprises 222 residues: MEVKPKLYYFQGRGRMESIRWLLATAGVEFEEEFLETREQYEKLQKDGCLLFGQVPLVEIDGMLLTQTRAILSYLAAKYNLYGKDLKERVRIDMYADGTQDLMMMIIGAPFKAPQEKEESLALAVKRAKNRYFPVFEKILKDHGEAFLVGNQLSWADIQLLEAILMVEEVSAPVLSDFPLLQAFKTRISNIPTIKKFLQPGSQRKPPPDGHYVDVVRTVLKF.

M1 is subject to N-acetylmethionine. The 81-residue stretch at 3 to 83 folds into the GST N-terminal domain; that stretch reads VKPKLYYFQG…YLAAKYNLYG (81 aa). Residues Y9, 54–55, and 67–68 each bind glutathione; these read QV and QT. The GST C-terminal domain maps to 85–208; the sequence is DLKERVRIDM…QPGSQRKPPP (124 aa).

The protein belongs to the GST superfamily. Alpha family. In terms of assembly, homodimer.

Its subcellular location is the cytoplasm. It catalyses the reaction RX + glutathione = an S-substituted glutathione + a halide anion + H(+). Functionally, conjugation of reduced glutathione to a wide number of exogenous and endogenous hydrophobic electrophiles. The chain is Glutathione S-transferase alpha-4 (Gsta4) from Rattus norvegicus (Rat).